The following is a 796-amino-acid chain: Protocadherin beta-3 (796 aa).

A signal peptide spans 1-26; sequence MEAGGERFLRQRQVLLLFVFLGGSLA. Over 27–690 the chain is Extracellular; it reads GSESRRYSVA…AQADLLTVYL (664 aa). Cadherin domains lie at 35 to 133, 138 to 242, 247 to 347, 352 to 451, and 456 to 561; these read VAEE…SPVF, MHLK…APEF, YEVA…PPEL, VNSP…APAF, and YTLF…SPFV. Asn169 carries N-linked (GlcNAc...) asparagine glycosylation. N-linked (GlcNAc...) asparagine glycans are attached at residues Asn418 and Asn436. Asn567 carries N-linked (GlcNAc...) asparagine glycosylation. The Cadherin 6 domain occupies 568 to 671; that stretch reads GSAPCTELVP…LVDGFSQPYL (104 aa). A helical transmembrane segment spans residues 691 to 711; sequence VVALASVSSLFLFSVLLFVAV. The Cytoplasmic segment spans residues 712–796; that stretch reads RLCRRSRAAS…PSFRKSFEFS (85 aa).

The protein resides in the cell membrane. Potential calcium-dependent cell-adhesion protein. May be involved in the establishment and maintenance of specific neuronal connections in the brain. The sequence is that of Protocadherin beta-3 (PCDHB3) from Pan troglodytes (Chimpanzee).